Here is a 146-residue protein sequence, read N- to C-terminus: Metallothiol transferase FosB (146 aa).

In terms of domain architecture, VOC spans glycine 4 to glycine 120. Mg(2+) contacts are provided by histidine 7, histidine 66, and glutamate 116. The Proton donor/acceptor role is filled by glutamate 116.

The protein belongs to the fosfomycin resistance protein family. FosB subfamily. Homodimer. The cofactor is Mg(2+).

It is found in the cytoplasm. Functionally, metallothiol transferase which confers resistance to fosfomycin by catalyzing the addition of a thiol cofactor to fosfomycin. L-cysteine is probably the physiological thiol donor. In Shouchella clausii (strain KSM-K16) (Alkalihalobacillus clausii), this protein is Metallothiol transferase FosB.